Reading from the N-terminus, the 628-residue chain is F-box only protein 21 (628 aa).

Residues 28 to 84 (SCLVNLPGEVLEYILCCGSLTAADIGRVSSTCRRLRELCQSSGKVWKEQFRVRWPSL) enclose the F-box domain.

In terms of assembly, directly interacts with SKP1 and CUL1.

Its function is as follows. Substrate-recognition component of the SCF (SKP1-CUL1-F-box protein)-type E3 ubiquitin ligase complex. The polypeptide is F-box only protein 21 (FBXO21) (Homo sapiens (Human)).